A 413-amino-acid chain; its full sequence is Multifunctional CCA protein (413 aa).

ATP contacts are provided by Gly8 and Arg11. Positions 8 and 11 each coordinate CTP. Mg(2+)-binding residues include Asp21 and Asp23. Residues Arg91, Arg137, and Arg140 each contribute to the ATP site. The CTP site is built by Arg91, Arg137, and Arg140. An HD domain is found at 225 to 326; sequence TGVHVMMVID…ANLLQGVDAY (102 aa).

This sequence belongs to the tRNA nucleotidyltransferase/poly(A) polymerase family. Bacterial CCA-adding enzyme type 1 subfamily. In terms of assembly, monomer. Can also form homodimers and oligomers. The cofactor is Mg(2+). It depends on Ni(2+) as a cofactor.

It carries out the reaction a tRNA precursor + 2 CTP + ATP = a tRNA with a 3' CCA end + 3 diphosphate. It catalyses the reaction a tRNA with a 3' CCA end + 2 CTP + ATP = a tRNA with a 3' CCACCA end + 3 diphosphate. In terms of biological role, catalyzes the addition and repair of the essential 3'-terminal CCA sequence in tRNAs without using a nucleic acid template. Adds these three nucleotides in the order of C, C, and A to the tRNA nucleotide-73, using CTP and ATP as substrates and producing inorganic pyrophosphate. tRNA 3'-terminal CCA addition is required both for tRNA processing and repair. Also involved in tRNA surveillance by mediating tandem CCA addition to generate a CCACCA at the 3' terminus of unstable tRNAs. While stable tRNAs receive only 3'-terminal CCA, unstable tRNAs are marked with CCACCA and rapidly degraded. In Nitrosospira multiformis (strain ATCC 25196 / NCIMB 11849 / C 71), this protein is Multifunctional CCA protein.